The sequence spans 1199 residues: MSLPTYATLDGNEAVARVAYLLSEVIAIYPITPSSPMGEWSDAWAAEHRPNLWGTVPLVVEMQSEGGAAGTVHGALQSGALTTTFTASQGLMLMLPNMHKIAGELTAMVLHVAARSLAAQGLSIFGDHSDVMAARNTGFAMLSSNSVQEAHDFALIATATSFATRIPGLHFFDGFRTSHEEQKIELLPQEVLRGLIKDEDVLAHRGRALTPDRPKLRGTAQNPDVYFQARETVNPFYASYPNVLEQVMEQFGQLTGRHYRPYEYCGHPEAERVIVLMGSGAETAQETVDFLTAQGEKVGLLKVRLYRPFAGDRLVNALPKTVQKIAVLDRCKEPGSIGEPLYQDVLTAFFEAGMMPKIIGGRYGLSSKEFTPAMVKGVLDHLNQTNPKNHFTVGINDDLSHTSIDYDPSFSTEADSVVRAIFYGLGSDGTVGANKNSIKIIGEDTDNYAQGYFVYDSKKSGSVTVSHLRFGPNPILSTYLISQANFVACHQWEFLEQFEVLEPAVDGGVFLVNSPYGPEEIWREFPRKVQQEIIDKNLKVYTINANDVARDAGMGRRTNTVMQTCFFALAGVLPREEAIAKIKQSVQKTYGKKGQEIVEMNIKAVDSTLAHLYEVSVPETVSDDAPAMRPVVPDNAPVFVREVLGKIMARQGDDLPVSALPCDGTYPTATTQWEKRNVGHEIPVWDPDVCVQCGKCVIVCPHAVIRGKVYEEAELANAPVSFKFTNAKDHDWQGSKFTIQVAPEDCTGCGICVDVCPAKNKSQPRLRAINMAPQLPLREQERENWDFFLDLPNPDRLSLNLNKISHQQMQEPLFEFSGACAGCGETPYLKLVSQLFGDRMLVANATGCSSIYGGNLPTTPWAQNAEGRGPAWSNSLFEDNAEFGLGFRVAIDKQTEFAGELLKTFAGELGDSLVSEILNNAQTTEADIFEQRQLVEQVKQRLQNLETPQAQMFLSVADYLVKKSVWIIGGDGWAYDIGYGGLDHVLASGRNVNILVMDTEVYSNTGGQASKATPRAAVAKFAAGGKPSPKKDLGLMAMTYGNVYVASIAMGAKNEQSIKAFMEAEAYPGVSLIIAYSHCIAHGINMTTAMNHQKELVDSGRWLLYRYNPLLADEGKNPLQLDMGSPKVAIDKTVYSENRFAMLTRSQPEEAKRLMKLAQGDVNTRWAMYEYLAKRSLGGEINGNNHGVSPSPEVIAKSV.

4Fe-4S ferredoxin-type domains follow at residues 681 to 710 and 737 to 766; these read EIPVWDPDVCVQCGKCVIVCPHAVIRGKVY and FTIQVAPEDCTGCGICVDVCPAKNKSQPRL. Residues Cys-690, Cys-693, Cys-696, Cys-700, Cys-746, Cys-749, Cys-752, Cys-756, Cys-820, Cys-823, Cys-848, and Cys-1079 each contribute to the [4Fe-4S] cluster site.

Belongs to the pyruvate:ferredoxin/flavodoxin oxidoreductase family. [4Fe-4S] cluster is required as a cofactor.

The catalysed reaction is oxidized [flavodoxin] + pyruvate + CoA + 2 H(+) = reduced [flavodoxin] + acetyl-CoA + CO2. Oxidoreductase required for the transfer of electrons from pyruvate to flavodoxin. In Synechocystis sp. (strain ATCC 27184 / PCC 6803 / Kazusa), this protein is Putative pyruvate-flavodoxin oxidoreductase (nifJ).